Reading from the N-terminus, the 724-residue chain is N-alpha-acetyltransferase 35, NatC auxiliary subunit (724 aa).

The protein belongs to the MAK10 family. Component of the N-terminal acetyltransferase C (NatC) complex.

It is found in the cytoplasm. In terms of biological role, auxillary component of the N-terminal acetyltransferase C (NatC) complex which catalyzes acetylation of N-terminal methionine residues. N-terminal acetylation protects proteins from ubiquitination and degradation by the N-end rule pathway. Regulates cell proliferation during embryonic development. This chain is N-alpha-acetyltransferase 35, NatC auxiliary subunit (naa35), found in Danio rerio (Zebrafish).